The chain runs to 299 residues: Type II restriction enzyme BglI (299 aa).

Residues D116, D142, and I143 each contribute to the Mg(2+) site.

In terms of assembly, homodimer. Mg(2+) serves as cofactor.

The enzyme catalyses Endonucleolytic cleavage of DNA to give specific double-stranded fragments with terminal 5'-phosphates.. A P subtype restriction enzyme that recognizes the double-stranded sequence 5'-GCCNNNNNGGC-3' and cleaves before N-8. The protein is Type II restriction enzyme BglI (bglIR) of Bacillus subtilis.